A 219-amino-acid chain; its full sequence is MSDRQVRGVLGTKLGMTQLWDADNRIVPVTVVKVEPNVVTQIRTTTVDGYEAVQLATTAIAQRKATKPAAGHFEKAGVAPRRHLVELRTTDAADYSLGQEVTAEAFATGATVDVVGTTKGKGFAGVMKRHGFHGVGASHGAHRNHRKPGSIGGCATPGRVFKGMRMAGRMGAARQTTQNLTVQAVDAEKGLLLITGAIPGPRGGLVLVKSASKARVKEA.

Residues 136–156 (GASHGAHRNHRKPGSIGGCAT) are disordered.

This sequence belongs to the universal ribosomal protein uL3 family. As to quaternary structure, part of the 50S ribosomal subunit. Forms a cluster with proteins L14 and L19.

Its function is as follows. One of the primary rRNA binding proteins, it binds directly near the 3'-end of the 23S rRNA, where it nucleates assembly of the 50S subunit. The protein is Large ribosomal subunit protein uL3 of Kineococcus radiotolerans (strain ATCC BAA-149 / DSM 14245 / SRS30216).